The following is a 413-amino-acid chain: Heparan-sulfate 6-O-sulfotransferase 1-A (413 aa).

Over methionine 9–lysine 15 the chain is Cytoplasmic. A helical; Signal-anchor for type II membrane protein membrane pass occupies residues phenylalanine 16–proline 36. The Lumenal segment spans residues glycine 37 to tryptophan 413. A 3'-phosphoadenylyl sulfate-binding site is contributed by histidine 92–threonine 100. Residues lysine 122–lysine 123, arginine 139, tryptophan 144, and histidine 149 contribute to the substrate site. Histidine 149 (proton acceptor) is an active-site residue. The 3'-phosphoadenylyl sulfate site is built by arginine 183 and serine 191. Substrate contacts are provided by histidine 195 and tryptophan 202. Asparagine 262 carries an N-linked (GlcNAc...) asparagine glycan. 3'-phosphoadenylyl sulfate is bound at residue methionine 315 to tyrosine 317. Asparagine 318 carries N-linked (GlcNAc...) asparagine glycosylation. Residue arginine 321–alanine 322 coordinates 3'-phosphoadenylyl sulfate. Asparagine 329 is a glycosylation site (N-linked (GlcNAc...) asparagine). Residues proline 374 to proline 401 are disordered.

It belongs to the sulfotransferase 6 family. As to expression, during somitogenesis, first expressed in polster and presumptive forebrain. During mid-somitogenesis, expressed in eye, hindbrain and anterior spinal cord. During late somitogenesis, strong expression in eye and hindbrain, decreased levels in midbrain and anterior spinal cord. At 24 hours post-fertilization (hpf), expressed in neural retina and lens, brain and anterior spinal cord. At 36 hpf, retinal expression is confined to the ciliary marginal zone and there is strong expression in tectum, rhombomeres and otic vesicle. At 48 hpf, expressed in retinal ganglion cells and in tectum, rhombomeres and pectoral fin. Not detected in the vasculature during embryogenesis.

It is found in the membrane. The catalysed reaction is alpha-D-glucosaminyl-[heparan sulfate](n) + 3'-phosphoadenylyl sulfate = 6-sulfo-alpha-D-glucosaminyl-[heparan sulfate](n) + adenosine 3',5'-bisphosphate + H(+). In terms of biological role, 6-O-sulfation enzyme which catalyzes the transfer of sulfate from 3'-phosphoadenosine 5'-phosphosulfate (PAPS) to position 6 of the N-sulfoglucosamine residue (GlcNS) of heparan sulfate. This chain is Heparan-sulfate 6-O-sulfotransferase 1-A, found in Danio rerio (Zebrafish).